Here is a 384-residue protein sequence, read N- to C-terminus: Probable RNA 3'-terminal phosphate cyclase-like protein (384 aa).

The protein belongs to the RNA 3'-terminal cyclase family. Type 2 subfamily. As to quaternary structure, part of the small subunit (SSU) processome, composed of more than 70 proteins and the RNA chaperone small nucleolar RNA (snoRNA) U3.

It localises to the nucleus. The protein localises to the nucleolus. In terms of biological role, part of the small subunit (SSU) processome, first precursor of the small eukaryotic ribosomal subunit. During the assembly of the SSU processome in the nucleolus, many ribosome biogenesis factors, an RNA chaperone and ribosomal proteins associate with the nascent pre-rRNA and work in concert to generate RNA folding, modifications, rearrangements and cleavage as well as targeted degradation of pre-ribosomal RNA by the RNA exosome. Does not have cyclase activity. The protein is Probable RNA 3'-terminal phosphate cyclase-like protein (Rtc1) of Drosophila melanogaster (Fruit fly).